A 362-amino-acid chain; its full sequence is tRNA/tmRNA (uracil-C(5))-methyltransferase (362 aa).

S-adenosyl-L-methionine is bound by residues Q182, Y210, N215, E231, and D293. The active-site Nucleophile is the C318. Residue E352 is the Proton acceptor of the active site.

Belongs to the class I-like SAM-binding methyltransferase superfamily. RNA M5U methyltransferase family. TrmA subfamily.

The enzyme catalyses uridine(54) in tRNA + S-adenosyl-L-methionine = 5-methyluridine(54) in tRNA + S-adenosyl-L-homocysteine + H(+). It catalyses the reaction uridine(341) in tmRNA + S-adenosyl-L-methionine = 5-methyluridine(341) in tmRNA + S-adenosyl-L-homocysteine + H(+). Functionally, dual-specificity methyltransferase that catalyzes the formation of 5-methyluridine at position 54 (m5U54) in all tRNAs, and that of position 341 (m5U341) in tmRNA (transfer-mRNA). This is tRNA/tmRNA (uracil-C(5))-methyltransferase from Neisseria meningitidis serogroup A / serotype 4A (strain DSM 15465 / Z2491).